The primary structure comprises 1481 residues: Coiled-coil domain-containing protein 88B (1481 aa).

Coiled-coil stretches lie at residues 200 to 225 (ELVAEELEMQLRSLTGMMSRLARERD) and 258 to 491 (SHHL…GSQH). 3 disordered regions span residues 430-458 (ELQRSLEPPPGSPGEASLPGAAPSLQDEV), 494-731 (LEEQ…AIPE), and 1331-1481 (PRRE…SLSQ). Residue Ser-441 is modified to Phosphoserine. Composition is skewed to polar residues over residues 542-557 (ASYSDITRSPKCSQAP) and 568-590 (QMVSQDPQTSDQALQESDPTVET). At Ser-649 the chain carries Phosphoserine. Basic and acidic residues predominate over residues 660 to 695 (TLREPLKDQKALDRELELSKQQKETGRHEQRPKGLE). The stretch at 731–1308 (EEQALRDEVA…KIMDQYRVLE (578 aa)) forms a coiled coil. A phosphoserine mark is found at Ser-1353 and Ser-1384. Polar residues predominate over residues 1371-1386 (TGSSSPAPMRRVQSSL). Over residues 1453–1472 (LSEHEADDTREAFQEQKPEK) the composition is skewed to basic and acidic residues.

Belongs to the CCDC88 family. In terms of assembly, homodimer. Interacts with DOCK8. Interacts (via C-terminus) with intact microtubules. Interacts with dynein-dynactin motor complex. Interacts (via C-terminus) with HSPA5. Abundantly expressed in immune cells, including both CD4(+) and CD8(+) T-cells and in myeloid cells (at protein level). Expressed in endothelium (at protein level). Expressed specifically in spleen, bone marrow, lymph nodes and thymus. Expressed in liver and heart.

Its subcellular location is the membrane. The protein resides in the cytoplasm. The protein localises to the cytoskeleton. It localises to the microtubule organizing center. It is found in the endoplasmic reticulum. Its subcellular location is the golgi apparatus. Functionally, acts as a positive regulator of T-cell maturation and inflammatory function. Required for several functions of T-cells in both the CD4(+) and the CD8(+) compartments and this includes expression of cell surface markers of activation, proliferation, and cytokine production in response to specific or non-specific stimulation and during the course of infection with the mouse malaria parasite Plasmodium berghei. Enhances NK cell cytotoxicity by positively regulating polarization of microtubule-organizing center (MTOC) to cytotoxic synapse, lytic granule transport along microtubules, and dynein-mediated clustering to MTOC. Interacts with HSPA5 and stabilizes the interaction between HSPA5 and ERN1, leading to suppression of ERN1-induced JNK activation and endoplasmic reticulum stress-induced apoptosis. The protein is Coiled-coil domain-containing protein 88B (Ccdc88b) of Mus musculus (Mouse).